Consider the following 563-residue polypeptide: E3 ubiquitin-protein ligase IpaH2.5 (563 aa).

An interaction with target proteins region spans residues 1–270; it reads MIKSTNIQVI…PDYSGPQIFF (270 aa). LRR repeat units follow at residues 69-90, 91-115, 117-130, 131-150, 151-170, 171-195, 197-209, and 210-233; these read LQNQEAELNLSELDLKTLPDLP, PQITTLEIRKNLLTHLPDLPPMLKV, HAQFNQLESLPALP, ETLEELNAGDNKIKELPFLP, ENLTHLRVHNNRLHILPLLP, PELKLLVVSGNRLDSIPPFPDKLEG, ALANNFIEQLPEL, and PFSMNRAVLMNNNLTTLPESVLRL. The interval 271 to 281 is linker; it reads SMGNSATISAP. Positions 282 to 563 are E3 ubiquitin-protein ligase catalytic domain; sequence EHSLADAVTA…YRQLTDEVLA (282 aa). Positions 284–563 constitute an NEL domain; sequence SLADAVTAWF…YRQLTDEVLA (280 aa). The Glycyl thioester intermediate role is filled by C368.

It belongs to the LRR-containing bacterial E3 ligase family. As to quaternary structure, interacts with human RBCK1/HOIL-1 and RNF31/HOIP components of the LUBAC complex. Ubiquitinated in the presence of host E1 ubiquitin-activating enzyme, E2 ubiquitin-conjugating enzyme and ubiquitin.

The protein resides in the secreted. It is found in the host cytoplasm. The catalysed reaction is S-ubiquitinyl-[E2 ubiquitin-conjugating enzyme]-L-cysteine + [acceptor protein]-L-lysine = [E2 ubiquitin-conjugating enzyme]-L-cysteine + N(6)-ubiquitinyl-[acceptor protein]-L-lysine.. It functions in the pathway protein modification; protein ubiquitination. With respect to regulation, exists in an autoinhibited state in the absence of substrate protein, probably due to interactions of the leucine-rich repeat domain with the catalytic domain. Is activated upon binding to a substrate protein. E3 ubiquitin-protein ligase effector that inhibits host cell innate immunity during bacterial infection by catalyzing 'Lys-48'-linked polyubiquitination and subsequent degradation of host RNF31/HOIP. Host RNF31/HOIP is the catalytic component of the LUBAC complex, which conjugates linear ('Met-1'-linked) polyubiquitin chains at the surface of bacteria invading the host cytosol to form the ubiquitin coat surrounding bacteria. The bacterial ubiquitin coat acts as an 'eat-me' signal for xenophagy and promotes NF-kappa-B activation. This Shigella flexneri protein is E3 ubiquitin-protein ligase IpaH2.5.